The chain runs to 949 residues: Valine--tRNA ligase (949 aa).

The 'HIGH' region signature appears at 40 to 50; the sequence is PNVTGSLHMGH. The 'KMSKS' region signature appears at 553 to 557; sequence KMSKS. Position 556 (lysine 556) interacts with ATP. A coiled-coil region spans residues 877–949; sequence MAGLIDKEAE…QEQQDKIKAL (73 aa).

It belongs to the class-I aminoacyl-tRNA synthetase family. ValS type 1 subfamily. In terms of assembly, monomer.

Its subcellular location is the cytoplasm. It catalyses the reaction tRNA(Val) + L-valine + ATP = L-valyl-tRNA(Val) + AMP + diphosphate. Functionally, catalyzes the attachment of valine to tRNA(Val). As ValRS can inadvertently accommodate and process structurally similar amino acids such as threonine, to avoid such errors, it has a 'posttransfer' editing activity that hydrolyzes mischarged Thr-tRNA(Val) in a tRNA-dependent manner. In Idiomarina loihiensis (strain ATCC BAA-735 / DSM 15497 / L2-TR), this protein is Valine--tRNA ligase.